A 257-amino-acid chain; its full sequence is Proteasome assembly chaperone 1 (257 aa).

It belongs to the PSMG1 family. Forms a heterodimer with psmg2.

Functionally, chaperone protein which promotes assembly of the 20S proteasome as part of a heterodimer with psmg2. This chain is Proteasome assembly chaperone 1 (psmg1), found in Nematostella vectensis (Starlet sea anemone).